The chain runs to 209 residues: Probable GTP-binding protein EngB (209 aa).

An EngB-type G domain is found at 27 to 201 (SGVEIAFAGR…ATKLDSWFAE (175 aa)). GTP-binding positions include 35 to 42 (GRSNAGKS), 62 to 66 (GRTQL), 80 to 83 (DLPG), 147 to 150 (TKAD), and 180 to 182 (YSA). Mg(2+) is bound by residues Ser-42 and Thr-64.

Belongs to the TRAFAC class TrmE-Era-EngA-EngB-Septin-like GTPase superfamily. EngB GTPase family. It depends on Mg(2+) as a cofactor.

Functionally, necessary for normal cell division and for the maintenance of normal septation. The polypeptide is Probable GTP-binding protein EngB (Glaesserella parasuis serovar 5 (strain SH0165) (Haemophilus parasuis)).